Consider the following 333-residue polypeptide: Transaldolase (333 aa).

K135 functions as the Schiff-base intermediate with substrate in the catalytic mechanism.

Belongs to the transaldolase family. Type 1 subfamily. As to quaternary structure, homodimer.

It is found in the cytoplasm. The enzyme catalyses D-sedoheptulose 7-phosphate + D-glyceraldehyde 3-phosphate = D-erythrose 4-phosphate + beta-D-fructose 6-phosphate. It participates in carbohydrate degradation; pentose phosphate pathway; D-glyceraldehyde 3-phosphate and beta-D-fructose 6-phosphate from D-ribose 5-phosphate and D-xylulose 5-phosphate (non-oxidative stage): step 2/3. Transaldolase is important for the balance of metabolites in the pentose-phosphate pathway. The protein is Transaldolase of Prochlorococcus marinus (strain MIT 9312).